Reading from the N-terminus, the 218-residue chain is Glutathione S-transferase D7 (218 aa).

The region spanning Met1–Glu82 is the GST N-terminal domain. Glutathione contacts are provided by residues Ser11, His52–Ile54, and Glu66–Arg68. Residues Asp88–Thr207 form the GST C-terminal domain.

Belongs to the GST superfamily. Theta family. As to quaternary structure, homodimer.

The enzyme catalyses RX + glutathione = an S-substituted glutathione + a halide anion + H(+). Conjugation of reduced glutathione to a wide number of exogenous and endogenous hydrophobic electrophiles. This Anopheles gambiae (African malaria mosquito) protein is Glutathione S-transferase D7.